Reading from the N-terminus, the 203-residue chain is Histidine biosynthesis bifunctional protein HisIE (203 aa).

The phosphoribosyl-AMP cyclohydrolase stretch occupies residues 1-114 (MLTEQQRREL…FGNTAHQWLF (114 aa)). Positions 115–203 (LYQLEQLLAE…VIENLHKRHQ (89 aa)) are phosphoribosyl-ATP pyrophosphohydrolase.

The protein in the N-terminal section; belongs to the PRA-CH family. It in the C-terminal section; belongs to the PRA-PH family.

It is found in the cytoplasm. The enzyme catalyses 1-(5-phospho-beta-D-ribosyl)-ATP + H2O = 1-(5-phospho-beta-D-ribosyl)-5'-AMP + diphosphate + H(+). It catalyses the reaction 1-(5-phospho-beta-D-ribosyl)-5'-AMP + H2O = 1-(5-phospho-beta-D-ribosyl)-5-[(5-phospho-beta-D-ribosylamino)methylideneamino]imidazole-4-carboxamide. It participates in amino-acid biosynthesis; L-histidine biosynthesis; L-histidine from 5-phospho-alpha-D-ribose 1-diphosphate: step 2/9. It functions in the pathway amino-acid biosynthesis; L-histidine biosynthesis; L-histidine from 5-phospho-alpha-D-ribose 1-diphosphate: step 3/9. The chain is Histidine biosynthesis bifunctional protein HisIE (hisI) from Shigella flexneri.